We begin with the raw amino-acid sequence, 1873 residues long: Voltage-dependent L-type calcium channel subunit alpha-1S (1873 aa).

The disordered stretch occupies residues 1–23; the sequence is MEPSSPQDEGLRKKQPKKPLPEV. Topologically, residues 1–51 are cytoplasmic; the sequence is MEPSSPQDEGLRKKQPKKPLPEVLPRPPRALFCLTLQNPLRKACISIVEWK. An I repeat occupies 38–337; the sequence is NPLRKACISI…LVLGVLSGEF (300 aa). The chain crosses the membrane as a helical span at residues 52–70; the sequence is PFETIILLTIFANCVALAV. The Extracellular portion of the chain corresponds to 71-85; the sequence is YLPMPEDDNNSLNLG. N-linked (GlcNAc...) asparagine glycosylation is present at Asn79. A helical transmembrane segment spans residues 86 to 106; it reads LEKLEYFFLTVFSIEAAMKII. Over 107 to 115 the chain is Cytoplasmic; sequence AYGFLFHQD. A helical transmembrane segment spans residues 116–136; sequence AYLRSGWNVLDFIIVFLGVFT. At 137–160 the chain is on the extracellular side; that stretch reads AILEQVNVIQSNTAPMSSKGAGLD. A helical transmembrane segment spans residues 161–179; sequence VKALRAFRVLRPLRLVSGV. Residues 180–196 are Cytoplasmic-facing; that stretch reads PSLQVVLNSIFKAMLPL. A helical transmembrane segment spans residues 197 to 218; sequence FHIALLVLFMVIIYAIIGLELF. Over 219–279 the chain is Extracellular; it reads KGKMHKTCYY…HGITHFDNFG (61 aa). Intrachain disulfides connect Cys226–Cys254 and Cys245–Cys261. Residue Asn257 is glycosylated (N-linked (GlcNAc...) asparagine). Positions 280–301 form an intramembrane region, pore-forming; the sequence is FSMLTVYQCITMEGWTDVLYWV. A Selectivity filter of repeat I motif is present at residues 290–293; sequence TMEG. Glu292 contacts Ca(2+). Over 302–309 the chain is Extracellular; that stretch reads NDAIGNEW. A helical membrane pass occupies residues 310–330; that stretch reads PWIYFVTLILLGSFFILNLVL. Over 331 to 432 the chain is Cytoplasmic; sequence GVLSGEFTKE…WKCHDLVKSR (102 aa). The interval 357–374 is binding to the beta subunit; it reads QQLEEDLRGYMSWITQGE. 2 positions are modified to phosphoserine: Ser393 and Ser397. Residues 418–664 form an II repeat; sequence NRVFRWKCHD…VFLAIAVDNL (247 aa). A helical transmembrane segment spans residues 433–451; sequence VFYWLVILIVALNTLSIAS. Over 452-462 the chain is Extracellular; sequence EHHNQPLWLTH. Residues 463-483 traverse the membrane as a helical segment; it reads LQDIANRVLLSLFTIEMLLKM. Residues 484-494 are Cytoplasmic-facing; sequence YGLGLRQYFMS. The helical transmembrane segment at 495–514 threads the bilayer; it reads IFNRFDCFVVCSGILELLLV. At 515–523 the chain is on the extracellular side; sequence ESGAMTPLG. The chain crosses the membrane as a helical span at residues 524-542; sequence ISVLRCIRLLRLFKITKYW. Residues 543–561 lie on the Cytoplasmic side of the membrane; that stretch reads TSLSNLVASLLNSIRSIAS. The helical transmembrane segment at 562–581 threads the bilayer; the sequence is LLLLLFLFIIIFALLGMQLF. The Extracellular portion of the chain corresponds to 582-601; that stretch reads GGRYDFEDTEVRRSNFDNFP. Residues 602 to 623 constitute an intramembrane region (pore-forming); the sequence is QALISVFQVLTGEDWNSVMYNG. A Selectivity filter of repeat II motif is present at residues 612-615; it reads TGED. Glu614 lines the Ca(2+) pocket. Residues 624–633 lie on the Extracellular side of the membrane; it reads IMAYGGPSYP. The helical transmembrane segment at 634-653 threads the bilayer; that stretch reads GVLVCIYFIILFVCGNYILL. Topologically, residues 654 to 799 are cytoplasmic; the sequence is NVFLAIAVDN…VLCHRIVNAT (146 aa). Disordered regions lie at residues 673–717 and 731–757; these read AQKA…IPTT and EVKD…VSPR. Ser687 is modified (phosphoserine; by PKA). Positions 690–711 are enriched in basic and acidic residues; it reads LPDKTEEEKSVMAKKLEQKPKG. The segment covering 742–751 has biased composition (acidic residues); it reads PGDDEEDEPE. Residues 747-760 are interaction with STAC, STAC2 and STAC3 (via SH3 domains); sequence EDEPEIPVSPRPRP. The III repeat unit spans residues 786–1068; it reads NKVRVLCHRI…IFVGFVIVTF (283 aa). A helical membrane pass occupies residues 800–818; sequence WFTNFILLFILLSSAALAA. At 819-830 the chain is on the extracellular side; sequence EDPIRAESVRNQ. The helical transmembrane segment at 831–850 threads the bilayer; it reads ILGYFDIAFTSVFTVEIVLK. The Cytoplasmic segment spans residues 851–866; sequence MTTYGAFLHKGSFCRN. Residues 867-885 traverse the membrane as a helical segment; sequence YFNILDLLVVAVSLISMGL. Residues 886-892 are Extracellular-facing; that stretch reads ESSTISV. Residues 893–911 traverse the membrane as a helical segment; the sequence is VKILRVLRVLRPLRAINRA. Topologically, residues 912-930 are cytoplasmic; that stretch reads KGLKHVVQCVFVAIRTIGN. Residues 931-950 traverse the membrane as a helical segment; sequence IVLVTTLLQFMFACIGVQLF. Residues 951–1000 are Extracellular-facing; that stretch reads KGKFFSCNDLSKMTEEECRGYYYVYKDGDPTQMELRPRQWIHNDFHFDNV. Cys957 and Cys968 are joined by a disulfide. The interval 988–1077 is dihydropyridine binding; sequence RQWIHNDFHF…FQEQGETEYK (90 aa). The segment at residues 1001 to 1021 is an intramembrane region (pore-forming); that stretch reads LSAMMSLFTVSTFEGWPQLLY. The short motif at 1012–1015 is the Selectivity filter of repeat III element; the sequence is TFEG. Glu1014 lines the Ca(2+) pocket. Residues 1022–1038 are Extracellular-facing; it reads RAIDSNEEDMGPVYNNR. A helical membrane pass occupies residues 1039-1060; it reads VEMAIFFIIYIILIAFFMMNIF. Over 1061–1118 the chain is Cytoplasmic; that stretch reads VGFVIVTFQEQGETEYKNCELDKNQRQCVQYALKARPLRCYIPKNPYQYQVWYVVTSS. An IV repeat occupies 1105–1384; sequence NPYQYQVWYV…LFVAVIMDNF (280 aa). A helical membrane pass occupies residues 1119-1140; the sequence is YFEYLMFALIMLNTICLGMQHY. Topologically, residues 1141 to 1148 are extracellular; it reads HQSEEMNH. Residues 1149–1170 form a helical membrane-spanning segment; it reads ISDILNVAFTIIFTLEMILKLL. Residues 1171 to 1180 are Cytoplasmic-facing; it reads AFKARGYFGD. Residues 1181–1200 form a helical membrane-spanning segment; that stretch reads PWNVFDFLIVIGSIIDVILS. Topologically, residues 1201 to 1231 are extracellular; that stretch reads EIDTFLASSGGLYCLGGGCGNVDPDESARIS. The chain crosses the membrane as a helical span at residues 1232 to 1250; the sequence is SAFFRLFRVMRLIKLLSRA. Over 1251–1268 the chain is Cytoplasmic; that stretch reads EGVRTLLWTFIKSFQALP. A helical transmembrane segment spans residues 1269–1289; sequence YVALLIVMLFFIYAVIGMQMF. The Extracellular portion of the chain corresponds to 1290–1311; it reads GKIALVDGTQINRNNNFQTFPQ. Residues 1312–1330 constitute an intramembrane region (pore-forming); sequence AVLLLFRCATGEAWQEILL. Residues 1321–1324 carry the Selectivity filter of repeat IV motif; it reads TGEA. Over 1331–1356 the chain is Extracellular; sequence ACSYGKLCDPESDYAPGEEYTCGTNF. Residues 1337–1403 are dihydropyridine binding; that stretch reads LCDPESDYAP…LGPHHLDEFK (67 aa). A disulfide bridge links Cys1338 with Cys1352. The phenylalkylamine binding stretch occupies residues 1349–1391; sequence EYTCGTNFAYYYFISFYMLCAFLIINLFVAVIMDNFDYLTRDW. Residues 1357–1381 traverse the membrane as a helical segment; the sequence is AYYYFISFYMLCAFLIINLFVAVIM. Residues 1382–1873 lie on the Cytoplasmic side of the membrane; it reads DNFDYLTRDW…SQETLIPPRP (492 aa). Residues 1522-1542 are interaction with calmodulin; it reads KFYATFLIQEHFRKFMKRQEE. The residue at position 1575 (Ser1575) is a Phosphoserine; by PKA and CAMK2. A Phosphothreonine; by CK2 modification is found at Thr1579. Residue Ser1617 is modified to Phosphoserine; by PKA. 2 disordered regions span residues 1689 to 1782 and 1841 to 1873; these read EFPG…RPAP and GMAS…PPRP. A compositionally biased stretch (low complexity) spans 1847–1858; sequence GSLSRRSSLGSL.

It belongs to the calcium channel alpha-1 subunit (TC 1.A.1.11) family. CACNA1S subfamily. Component of a calcium channel complex consisting of a pore-forming alpha subunit (CACNA1S) and the ancillary subunits CACNB1 or CACNB2, CACNG1 and CACNA2D1. The channel complex contains alpha, beta, gamma and delta subunits in a 1:1:1:1 ratio, i.e. it contains either CACNB1 or CACNB2. CACNA1S channel activity is modulated by the auxiliary subunits (CACNB1 or CACNB2, CACNG1 and CACNA2D1). Interacts with DYSF and JSRP1. Interacts with RYR1. Interacts with STAC, STAC2 and STAC3 (via their SH3 domains). Interaction with STAC3 promotes expression at the cell membrane. Interaction with STAC2 promotes expression at the cell membrane, but with much lower efficiency than STAC3. Interaction with STAC1 leads to very low levels expression at the cell membrane, much less than the levels observed upon interaction with STAC3 and STAC2. Interacts with CALM. Post-translationally, the alpha-1S subunit is found in two isoforms in the skeletal muscle: a minor form of 212 kDa containing the complete amino acid sequence, and a major form of 190 kDa derived from the full-length form by post-translational proteolysis close to Phe-1690. Phosphorylated. Phosphorylation by PKA activates the calcium channel. Both the minor and major forms are phosphorylated in vitro by PKA. Phosphorylation at Ser-1575 is involved in beta-adrenergic-mediated regulation of the channel. Detected in skeletal muscle T-tubules (at protein level).

The protein localises to the cell membrane. The protein resides in the sarcolemma. It localises to the T-tubule. The enzyme catalyses Ca(2+)(in) = Ca(2+)(out). With respect to regulation, channel activity is blocked by dihydropyridines (DHP), phenylalkylamines, and by benzothiazepines. In terms of biological role, pore-forming, alpha-1S subunit of the voltage-gated calcium channel that gives rise to L-type calcium currents in skeletal muscle. Calcium channels containing the alpha-1S subunit play an important role in excitation-contraction coupling in skeletal muscle via their interaction with RYR1, which triggers Ca(2+) release from the sarcplasmic reticulum and ultimately results in muscle contraction. Long-lasting (L-type) calcium channels belong to the 'high-voltage activated' (HVA) group. The polypeptide is Voltage-dependent L-type calcium channel subunit alpha-1S (CACNA1S) (Oryctolagus cuniculus (Rabbit)).